The primary structure comprises 240 residues: Ribonuclease P protein component (240 aa).

The segment at 1-140 is disordered; it reads MDEKDLATQQ…KKAGGKGLVS (140 aa). Positions 40 to 51 are enriched in pro residues; that stretch reads APPPHRVIPPHP. The tract at residues 47–123 is insert; that stretch reads IPPHPGLRQD…PGPDRDGGSK (77 aa). Residues 122 to 132 are compositionally biased toward low complexity; sequence SKASRASSPKK.

This sequence belongs to the RnpA family. Consists of a catalytic RNA component (M1 or rnpB) and a protein subunit.

It catalyses the reaction Endonucleolytic cleavage of RNA, removing 5'-extranucleotides from tRNA precursor.. Functionally, RNaseP catalyzes the removal of the 5'-leader sequence from pre-tRNA to produce the mature 5'-terminus. It can also cleave other RNA substrates such as 4.5S RNA. The protein component plays an auxiliary but essential role in vivo by binding to the 5'-leader sequence and broadening the substrate specificity of the ribozyme. The chain is Ribonuclease P protein component from Thermus filiformis.